The chain runs to 647 residues: MDKINITFPDGNSTEFDKGITTEEIAQSISPGLRKKAVAGKFNDKMVDLTRPLEEDGSIEIVTPGSDEALEVLRHSTAHLMAQALKRLYGDVKFGVGPVIDGGFYYDFDTDVKISSDDFPEIEKTMKQIVNENYKIERKVVSREEAKEFFKDDPYKLELIDAIPEDESVTLYSQGEFTDLCRGVHVPSTSKIKEFKLLSTAGAYWRGDSNNKMLQRIYGTAFFDKKDLKAHLKMLEERKERDHRKIGKELDLFMNSQLVGAGLPLWLPNGATIRREIERYIVDKEVALGYDHVYTPVMANVELYKTSGHWDHYQDDMFPPMKLDETEEMVLRPMNCPHHMMIYKNKPHSYRELPIRIAELGTMHRYEASGAVSGLQRVRGMTLNDSHIFVRPDQIKEEFKRVVELILDVYEDFGFENYSFRLSYRDPEDKEKYFDDDEMWERAESMLKEAVDEMGLPYEEAIGEAAFYGPKLDVQVKTAMGKEETLSTAQLDFLLPERFDLAYIGKDGEEHRPVVIHRGVVSTMERFVAFLTEETKGAFPTWLAPKQVEIIPVNVDLHYDYARQIQDELKSQGVRVEIDDRNEKMGYKIREAQMHKIPYQLVIGDKEIENNEVNVRKYGSKDQETVEKDEFIWNLVDEIRLKKQRQN.

Residues 1-63 form the TGS domain; the sequence is MDKINITFPD…EEDGSIEIVT (63 aa). The interval 242 to 540 is catalytic; it reads DHRKIGKELD…LTEETKGAFP (299 aa). Positions 336, 387, and 517 each coordinate Zn(2+).

Belongs to the class-II aminoacyl-tRNA synthetase family. Homodimer. The cofactor is Zn(2+).

The protein resides in the cytoplasm. It carries out the reaction tRNA(Thr) + L-threonine + ATP = L-threonyl-tRNA(Thr) + AMP + diphosphate + H(+). In terms of biological role, catalyzes the attachment of threonine to tRNA(Thr) in a two-step reaction: L-threonine is first activated by ATP to form Thr-AMP and then transferred to the acceptor end of tRNA(Thr). Also edits incorrectly charged L-seryl-tRNA(Thr). This Staphylococcus carnosus (strain TM300) protein is Threonine--tRNA ligase.